A 452-amino-acid chain; its full sequence is Prephenate dehydrogenase [NADP(+)] (452 aa).

14–43 (KVIGIIGLGDMGLLYANKFTDAGWGVICCD) is a binding site for NADP(+). One can recognise a Prephenate/arogenate dehydrogenase domain in the interval 14–297 (KVIGIIGLGD…GKHTGLLLLD (284 aa)).

This sequence belongs to the prephenate/arogenate dehydrogenase family.

The catalysed reaction is prephenate + NADP(+) = 3-(4-hydroxyphenyl)pyruvate + CO2 + NADPH. It functions in the pathway amino-acid biosynthesis; L-tyrosine biosynthesis; (4-hydroxyphenyl)pyruvate from prephenate (NADP(+) route): step 1/1. In Saccharomyces cerevisiae (strain ATCC 204508 / S288c) (Baker's yeast), this protein is Prephenate dehydrogenase [NADP(+)] (TYR1).